Reading from the N-terminus, the 167-residue chain is Lipoprotein signal peptidase (167 aa).

Transmembrane regions (helical) follow at residues 8-28 (TFLT…VVLL), 46-66 (WGHF…FGLF), 68-88 (QYKI…ALFL), and 101-121 (IALT…LLHG). Active-site residues include aspartate 125 and aspartate 143. A helical transmembrane segment spans residues 139–159 (FNLADAFISIGTLLLIGHLYF).

This sequence belongs to the peptidase A8 family.

The protein localises to the cell inner membrane. The catalysed reaction is Release of signal peptides from bacterial membrane prolipoproteins. Hydrolyzes -Xaa-Yaa-Zaa-|-(S,diacylglyceryl)Cys-, in which Xaa is hydrophobic (preferably Leu), and Yaa (Ala or Ser) and Zaa (Gly or Ala) have small, neutral side chains.. Its pathway is protein modification; lipoprotein biosynthesis (signal peptide cleavage). Functionally, this protein specifically catalyzes the removal of signal peptides from prolipoproteins. The chain is Lipoprotein signal peptidase from Chlamydia trachomatis serovar L2b (strain UCH-1/proctitis).